Here is a 239-residue protein sequence, read N- to C-terminus: Uridylate kinase (239 aa).

13 to 16 (KVSG) provides a ligand contact to ATP. Gly-55 is a binding site for UMP. ATP is bound by residues Gly-56 and Arg-60. Residues Asp-75 and 136–143 (TGNPFCTT) each bind UMP. 4 residues coordinate ATP: Thr-163, Gln-164, Tyr-169, and Asp-172.

It belongs to the UMP kinase family. As to quaternary structure, homohexamer.

It is found in the cytoplasm. The enzyme catalyses UMP + ATP = UDP + ADP. The protein operates within pyrimidine metabolism; CTP biosynthesis via de novo pathway; UDP from UMP (UMPK route): step 1/1. With respect to regulation, inhibited by UTP. Catalyzes the reversible phosphorylation of UMP to UDP. The protein is Uridylate kinase of Rickettsia bellii (strain RML369-C).